Consider the following 323-residue polypeptide: tRNA U34 carboxymethyltransferase (323 aa).

Residues Lys91, Trp105, Lys110, Gly130, 152 to 154 (DPS), 181 to 182 (IE), Met196, Tyr200, and Arg315 each bind carboxy-S-adenosyl-L-methionine.

This sequence belongs to the class I-like SAM-binding methyltransferase superfamily. CmoB family. Homotetramer.

It catalyses the reaction carboxy-S-adenosyl-L-methionine + 5-hydroxyuridine(34) in tRNA = 5-carboxymethoxyuridine(34) in tRNA + S-adenosyl-L-homocysteine + H(+). Functionally, catalyzes carboxymethyl transfer from carboxy-S-adenosyl-L-methionine (Cx-SAM) to 5-hydroxyuridine (ho5U) to form 5-carboxymethoxyuridine (cmo5U) at position 34 in tRNAs. The protein is tRNA U34 carboxymethyltransferase of Vibrio parahaemolyticus serotype O3:K6 (strain RIMD 2210633).